The following is a 702-amino-acid chain: Polyribonucleotide nucleotidyltransferase 2 (702 aa).

2 residues coordinate Mg(2+): Asp483 and Asp489. The 60-residue stretch at 550-609 folds into the KH domain; it reads PQVTKLKVHPDKVREVIGAGGKVINKIIDETGVKINIENDGTIYIAAPDQESARVALEMI. The S1 motif domain maps to 619–687; the sequence is GEVYTGKVIK…PQGKIGLSRK (69 aa).

This sequence belongs to the polyribonucleotide nucleotidyltransferase family. The cofactor is Mg(2+).

Its subcellular location is the cytoplasm. It carries out the reaction RNA(n+1) + phosphate = RNA(n) + a ribonucleoside 5'-diphosphate. Involved in mRNA degradation. Catalyzes the phosphorolysis of single-stranded polyribonucleotides processively in the 3'- to 5'-direction. The polypeptide is Polyribonucleotide nucleotidyltransferase 2 (Alkaliphilus metalliredigens (strain QYMF)).